Here is a 604-residue protein sequence, read N- to C-terminus: Elongation factor 4 (604 aa).

A tr-type G domain is found at 2–184; it reads DHIRNFSIIA…AVITRMPAPR (183 aa). GTP is bound by residues 14-19 and 131-134; these read DHGKST and NKMD.

It belongs to the TRAFAC class translation factor GTPase superfamily. Classic translation factor GTPase family. LepA subfamily.

It is found in the cell inner membrane. It carries out the reaction GTP + H2O = GDP + phosphate + H(+). In terms of biological role, required for accurate and efficient protein synthesis under certain stress conditions. May act as a fidelity factor of the translation reaction, by catalyzing a one-codon backward translocation of tRNAs on improperly translocated ribosomes. Back-translocation proceeds from a post-translocation (POST) complex to a pre-translocation (PRE) complex, thus giving elongation factor G a second chance to translocate the tRNAs correctly. Binds to ribosomes in a GTP-dependent manner. In Methylibium petroleiphilum (strain ATCC BAA-1232 / LMG 22953 / PM1), this protein is Elongation factor 4.